The following is a 182-amino-acid chain: Ribosome-recycling factor (182 aa).

This sequence belongs to the RRF family.

It is found in the cytoplasm. Its function is as follows. Responsible for the release of ribosomes from messenger RNA at the termination of protein biosynthesis. May increase the efficiency of translation by recycling ribosomes from one round of translation to another. The protein is Ribosome-recycling factor of Nostoc punctiforme (strain ATCC 29133 / PCC 73102).